A 280-amino-acid polypeptide reads, in one-letter code: Bifunctional protein FolD (280 aa).

NADP(+) is bound by residues 166-168 (GRS) and S191.

This sequence belongs to the tetrahydrofolate dehydrogenase/cyclohydrolase family. Homodimer.

The catalysed reaction is (6R)-5,10-methylene-5,6,7,8-tetrahydrofolate + NADP(+) = (6R)-5,10-methenyltetrahydrofolate + NADPH. It catalyses the reaction (6R)-5,10-methenyltetrahydrofolate + H2O = (6R)-10-formyltetrahydrofolate + H(+). It participates in one-carbon metabolism; tetrahydrofolate interconversion. Functionally, catalyzes the oxidation of 5,10-methylenetetrahydrofolate to 5,10-methenyltetrahydrofolate and then the hydrolysis of 5,10-methenyltetrahydrofolate to 10-formyltetrahydrofolate. The polypeptide is Bifunctional protein FolD (Teredinibacter turnerae (strain ATCC 39867 / T7901)).